Reading from the N-terminus, the 277-residue chain is Elongation factor Ts (277 aa).

The segment at 81-84 (TDFV) is involved in Mg(2+) ion dislocation from EF-Tu.

The protein belongs to the EF-Ts family.

The protein localises to the cytoplasm. Associates with the EF-Tu.GDP complex and induces the exchange of GDP to GTP. It remains bound to the aminoacyl-tRNA.EF-Tu.GTP complex up to the GTP hydrolysis stage on the ribosome. The sequence is that of Elongation factor Ts from Amoebophilus asiaticus (strain 5a2).